A 413-amino-acid polypeptide reads, in one-letter code: Methylaspartate ammonia-lyase (413 aa).

Residue Gln172 coordinates (2S,3S)-3-methyl-L-aspartate. Mg(2+)-binding residues include Asp238, Glu273, and Asp307. Gln329 lines the (2S,3S)-3-methyl-L-aspartate pocket. Lys331 functions as the Proton acceptor in the catalytic mechanism. (2S,3S)-3-methyl-L-aspartate is bound at residue 360–361 (TC).

It belongs to the methylaspartate ammonia-lyase family. In terms of assembly, homodimer. Mg(2+) serves as cofactor.

The enzyme catalyses (2S,3S)-3-methyl-L-aspartate = mesaconate + NH4(+). The protein operates within amino-acid degradation; L-glutamate degradation via mesaconate pathway; acetate and pyruvate from L-glutamate: step 2/4. In terms of biological role, involved in the methylaspartate cycle. Catalyzes the formation of the alpha,beta-unsaturated bond by the reversible anti elimination of ammonia from L-threo-beta-methylaspartate (L-threo-(2S,3S)-3-methylaspartate) to give mesaconate. The polypeptide is Methylaspartate ammonia-lyase (Citrobacter amalonaticus).